A 98-amino-acid chain; its full sequence is Toxin ParE1 (98 aa).

The protein belongs to the RelE toxin family.

Functionally, toxic component of a type II toxin-antitoxin (TA) system. Its toxic effect is neutralized by coexpression with cognate antitoxin ParD1. The protein is Toxin ParE1 (parE1) of Mycobacterium tuberculosis (strain CDC 1551 / Oshkosh).